Consider the following 420-residue polypeptide: Acetylornithine aminotransferase (420 aa).

Pyridoxal 5'-phosphate-binding positions include 118 to 119 (GA) and phenylalanine 151. A N(2)-acetyl-L-ornithine-binding site is contributed by arginine 154. A pyridoxal 5'-phosphate-binding site is contributed by 242-245 (DEVQ). The residue at position 271 (lysine 271) is an N6-(pyridoxal phosphate)lysine. Serine 298 lines the N(2)-acetyl-L-ornithine pocket. Threonine 299 provides a ligand contact to pyridoxal 5'-phosphate.

Belongs to the class-III pyridoxal-phosphate-dependent aminotransferase family. ArgD subfamily. As to quaternary structure, homodimer. Pyridoxal 5'-phosphate is required as a cofactor.

It localises to the cytoplasm. It catalyses the reaction N(2)-acetyl-L-ornithine + 2-oxoglutarate = N-acetyl-L-glutamate 5-semialdehyde + L-glutamate. The protein operates within amino-acid biosynthesis; L-arginine biosynthesis; N(2)-acetyl-L-ornithine from L-glutamate: step 4/4. This Parasynechococcus marenigrum (strain WH8102) protein is Acetylornithine aminotransferase.